An 800-amino-acid chain; its full sequence is Probable inorganic carbon transporter subunit DabA (800 aa).

4 residues coordinate Zn(2+): Cys-329, Asp-331, His-488, and Cys-503.

This sequence belongs to the inorganic carbon transporter (TC 9.A.2) DabA family. As to quaternary structure, forms a complex with DabB. The cofactor is Zn(2+).

The protein resides in the cell inner membrane. In terms of biological role, part of an energy-coupled inorganic carbon pump. In Roseobacter denitrificans (strain ATCC 33942 / OCh 114) (Erythrobacter sp. (strain OCh 114)), this protein is Probable inorganic carbon transporter subunit DabA.